The primary structure comprises 93 residues: Small ribosomal subunit protein uS19 (93 aa).

This sequence belongs to the universal ribosomal protein uS19 family.

Its function is as follows. Protein S19 forms a complex with S13 that binds strongly to the 16S ribosomal RNA. The polypeptide is Small ribosomal subunit protein uS19 (Mycobacterium tuberculosis (strain ATCC 25177 / H37Ra)).